We begin with the raw amino-acid sequence, 424 residues long: Tol-Pal system protein TolB (424 aa).

Residues 1 to 16 (MKQLLVLILSLYTTLA) form the signal peptide.

It belongs to the TolB family. As to quaternary structure, the Tol-Pal system is composed of five core proteins: the inner membrane proteins TolA, TolQ and TolR, the periplasmic protein TolB and the outer membrane protein Pal. They form a network linking the inner and outer membranes and the peptidoglycan layer.

It is found in the periplasm. Functionally, part of the Tol-Pal system, which plays a role in outer membrane invagination during cell division and is important for maintaining outer membrane integrity. This is Tol-Pal system protein TolB from Ruthia magnifica subsp. Calyptogena magnifica.